Consider the following 228-residue polypeptide: Cytochrome c oxidase subunit 2 (228 aa).

Topologically, residues 1–26 (MSTWANLGLQDSASPLMEQLIFFHDH) are mitochondrial intermembrane. The helical transmembrane segment at 27–48 (ALLILVMITVLVGYLMFMLFFN) threads the bilayer. Over 49 to 62 (NYVNRFLLHGQLIE) the chain is Mitochondrial matrix. The chain crosses the membrane as a helical span at residues 63–82 (MIWTILPAIILLFIALPSLR). Over 83–228 (LLYLLDEINE…FIKWISSNNS (146 aa)) the chain is Mitochondrial intermembrane. Cu cation contacts are provided by H161, C196, E198, C200, H204, and M207. E198 lines the Mg(2+) pocket.

Belongs to the cytochrome c oxidase subunit 2 family. As to quaternary structure, component of the cytochrome c oxidase (complex IV, CIV), a multisubunit enzyme composed of a catalytic core of 3 subunits and several supernumerary subunits. The complex exists as a monomer or a dimer and forms supercomplexes (SCs) in the inner mitochondrial membrane with ubiquinol-cytochrome c oxidoreductase (cytochrome b-c1 complex, complex III, CIII). Requires Cu cation as cofactor.

The protein resides in the mitochondrion inner membrane. The enzyme catalyses 4 Fe(II)-[cytochrome c] + O2 + 8 H(+)(in) = 4 Fe(III)-[cytochrome c] + 2 H2O + 4 H(+)(out). Its function is as follows. Component of the cytochrome c oxidase, the last enzyme in the mitochondrial electron transport chain which drives oxidative phosphorylation. The respiratory chain contains 3 multisubunit complexes succinate dehydrogenase (complex II, CII), ubiquinol-cytochrome c oxidoreductase (cytochrome b-c1 complex, complex III, CIII) and cytochrome c oxidase (complex IV, CIV), that cooperate to transfer electrons derived from NADH and succinate to molecular oxygen, creating an electrochemical gradient over the inner membrane that drives transmembrane transport and the ATP synthase. Cytochrome c oxidase is the component of the respiratory chain that catalyzes the reduction of oxygen to water. Electrons originating from reduced cytochrome c in the intermembrane space (IMS) are transferred via the dinuclear copper A center (CU(A)) of subunit 2 and heme A of subunit 1 to the active site in subunit 1, a binuclear center (BNC) formed by heme A3 and copper B (CU(B)). The BNC reduces molecular oxygen to 2 water molecules using 4 electrons from cytochrome c in the IMS and 4 protons from the mitochondrial matrix. This is Cytochrome c oxidase subunit 2 (mt:CoII) from Drosophila simulans (Fruit fly).